A 299-amino-acid polypeptide reads, in one-letter code: ATP phosphoribosyltransferase (299 aa).

It belongs to the ATP phosphoribosyltransferase family. Long subfamily. As to quaternary structure, equilibrium between an active dimeric form, an inactive hexameric form and higher aggregates. Interconversion between the various forms is largely reversible and is influenced by the natural substrates and inhibitors of the enzyme. The cofactor is Mg(2+).

The protein resides in the cytoplasm. It catalyses the reaction 1-(5-phospho-beta-D-ribosyl)-ATP + diphosphate = 5-phospho-alpha-D-ribose 1-diphosphate + ATP. The protein operates within amino-acid biosynthesis; L-histidine biosynthesis; L-histidine from 5-phospho-alpha-D-ribose 1-diphosphate: step 1/9. Its activity is regulated as follows. Feedback inhibited by histidine. In terms of biological role, catalyzes the condensation of ATP and 5-phosphoribose 1-diphosphate to form N'-(5'-phosphoribosyl)-ATP (PR-ATP). Has a crucial role in the pathway because the rate of histidine biosynthesis seems to be controlled primarily by regulation of HisG enzymatic activity. This Buchnera aphidicola subsp. Baizongia pistaciae (strain Bp) protein is ATP phosphoribosyltransferase.